Here is a 155-residue protein sequence, read N- to C-terminus: Small ribosomal subunit protein eS19B (155 aa).

This sequence belongs to the eukaryotic ribosomal protein eS19 family.

This is Small ribosomal subunit protein eS19B (RpS19b) from Drosophila melanogaster (Fruit fly).